Here is a 100-residue protein sequence, read N- to C-terminus: Nucleoid-associated protein Cagg_3200 (100 aa).

It belongs to the YbaB/EbfC family. As to quaternary structure, homodimer.

It is found in the cytoplasm. Its subcellular location is the nucleoid. Its function is as follows. Binds to DNA and alters its conformation. May be involved in regulation of gene expression, nucleoid organization and DNA protection. This Chloroflexus aggregans (strain MD-66 / DSM 9485) protein is Nucleoid-associated protein Cagg_3200.